Here is a 335-residue protein sequence, read N- to C-terminus: Holliday junction branch migration complex subunit RuvB (335 aa).

Residues 4–184 (ADRLVSAEVL…FGIVQRLEFY (181 aa)) form a large ATPase domain (RuvB-L) region. ATP-binding positions include I23, R24, G65, K68, T69, T70, 131-133 (EDY), R174, Y184, and R221. T69 is a binding site for Mg(2+). Residues 185 to 255 (NVDDLQSIVS…IATRALDMLS (71 aa)) form a small ATPAse domain (RuvB-S) region. Residues 258–335 (AAGFDYLDRK…RHFGMVRNQE (78 aa)) form a head domain (RuvB-H) region. DNA contacts are provided by R294, R313, and R318.

The protein belongs to the RuvB family. In terms of assembly, homohexamer. Forms an RuvA(8)-RuvB(12)-Holliday junction (HJ) complex. HJ DNA is sandwiched between 2 RuvA tetramers; dsDNA enters through RuvA and exits via RuvB. An RuvB hexamer assembles on each DNA strand where it exits the tetramer. Each RuvB hexamer is contacted by two RuvA subunits (via domain III) on 2 adjacent RuvB subunits; this complex drives branch migration. In the full resolvosome a probable DNA-RuvA(4)-RuvB(12)-RuvC(2) complex forms which resolves the HJ.

The protein resides in the cytoplasm. It catalyses the reaction ATP + H2O = ADP + phosphate + H(+). Its function is as follows. The RuvA-RuvB-RuvC complex processes Holliday junction (HJ) DNA during genetic recombination and DNA repair, while the RuvA-RuvB complex plays an important role in the rescue of blocked DNA replication forks via replication fork reversal (RFR). RuvA specifically binds to HJ cruciform DNA, conferring on it an open structure. The RuvB hexamer acts as an ATP-dependent pump, pulling dsDNA into and through the RuvAB complex. RuvB forms 2 homohexamers on either side of HJ DNA bound by 1 or 2 RuvA tetramers; 4 subunits per hexamer contact DNA at a time. Coordinated motions by a converter formed by DNA-disengaged RuvB subunits stimulates ATP hydrolysis and nucleotide exchange. Immobilization of the converter enables RuvB to convert the ATP-contained energy into a lever motion, pulling 2 nucleotides of DNA out of the RuvA tetramer per ATP hydrolyzed, thus driving DNA branch migration. The RuvB motors rotate together with the DNA substrate, which together with the progressing nucleotide cycle form the mechanistic basis for DNA recombination by continuous HJ branch migration. Branch migration allows RuvC to scan DNA until it finds its consensus sequence, where it cleaves and resolves cruciform DNA. In Photorhabdus laumondii subsp. laumondii (strain DSM 15139 / CIP 105565 / TT01) (Photorhabdus luminescens subsp. laumondii), this protein is Holliday junction branch migration complex subunit RuvB.